We begin with the raw amino-acid sequence, 138 residues long: Large ribosomal subunit protein uL16 (138 aa).

A compositionally biased stretch (basic residues) spans Met1–Ile18. The interval Met1–Asn21 is disordered.

Belongs to the universal ribosomal protein uL16 family. As to quaternary structure, part of the 50S ribosomal subunit.

Its function is as follows. Binds 23S rRNA and is also seen to make contacts with the A and possibly P site tRNAs. The polypeptide is Large ribosomal subunit protein uL16 (Rhodopirellula baltica (strain DSM 10527 / NCIMB 13988 / SH1)).